The primary structure comprises 356 residues: Guanine nucleotide-binding protein alpha-3 subunit (356 aa).

The segment at 1 to 26 (MGACMSKNDEETEQKKRSQKIDRDLE) is disordered. Residue glycine 2 is the site of N-myristoyl glycine attachment. Cysteine 4 carries S-palmitoyl cysteine lipidation. Positions 7 to 23 (KNDEETEQKKRSQKIDR) are enriched in basic and acidic residues. Positions 34–356 (KECKILLLGS…NNALKDSGIL (323 aa)) constitute a G-alpha domain. Positions 37–50 (KILLLGSGESGKST) are G1 motif. GTP-binding positions include 42 to 49 (GSGESGKS), 179 to 185 (LRARTKT), 204 to 208 (DVGGQ), 273 to 276 (NKVD), and alanine 328. 2 residues coordinate Mg(2+): serine 49 and threonine 185. The G2 motif stretch occupies residues 177-185 (DVLRARTKT). The tract at residues 200-209 (IHMFDVGGQR) is G3 motif. Positions 269-276 (ILFLNKVD) are G4 motif. The tract at residues 326–331 (TQATDT) is G5 motif.

It belongs to the G-alpha family. G(q) subfamily. In terms of assembly, g proteins are composed of 3 units; alpha, beta and gamma. The alpha chain contains the guanine nucleotide binding site.

Functionally, guanine nucleotide-binding proteins (G proteins) are involved as modulators or transducers in various transmembrane signaling systems. Involved in conidiation. The polypeptide is Guanine nucleotide-binding protein alpha-3 subunit (gna-3) (Neurospora crassa (strain ATCC 24698 / 74-OR23-1A / CBS 708.71 / DSM 1257 / FGSC 987)).